Here is a 257-residue protein sequence, read N- to C-terminus: MLGHAAKLLARARFAIAFTGAGISAESGIPTFRGRNGLWKTYRAEELATPEAFKRDPHLVWEFYKWRMRKILKAEPNPAHKALAELENMGVLKAVITQNVDDLHREAGSRKVVELHGNIFRVRCVSCSYRENLKESGRVFEFVREKELPKCPKCGSLLRPDVVWFGEPLPREALEEAFSLAERADVVLVVGTSGVVYPAAYVPYIVKERGGKVIEVNVERSGITPIADVFIRGKAGEVMPELLRRVKDIMAERNHYG.

A Deacetylase sirtuin-type domain is found at Met-1 to Glu-252. Gly-20–Trp-39 is an NAD(+) binding site. Tyr-64 and Arg-67 together coordinate substrate. Residue Gln-98 to Asp-101 coordinates NAD(+). The active-site Proton acceptor is the His-116. Zn(2+)-binding residues include Cys-124, Cys-127, Cys-151, and Cys-154. NAD(+) contacts are provided by residues Gly-191–Ser-193, Asn-217–Glu-219, and Ala-235.

It belongs to the sirtuin family. Class III subfamily. Zn(2+) serves as cofactor.

Its subcellular location is the cytoplasm. The catalysed reaction is N(6)-acetyl-L-lysyl-[protein] + NAD(+) + H2O = 2''-O-acetyl-ADP-D-ribose + nicotinamide + L-lysyl-[protein]. It carries out the reaction N(6)-succinyl-L-lysyl-[protein] + NAD(+) + H2O = 2''-O-succinyl-ADP-D-ribose + nicotinamide + L-lysyl-[protein]. NAD-dependent lysine deacetylase and desuccinylase that specifically removes acetyl and succinyl groups on target proteins. Modulates the activities of several proteins which are inactive in their acylated form. Deacetylates the N-terminal lysine residue of Alba, the major archaeal chromatin protein and that, in turn, increases Alba's DNA binding affinity, thereby repressing transcription. The protein is NAD-dependent protein deacylase of Thermococcus kodakarensis (strain ATCC BAA-918 / JCM 12380 / KOD1) (Pyrococcus kodakaraensis (strain KOD1)).